Here is a 155-residue protein sequence, read N- to C-terminus: Ribosome maturation factor RimP (155 aa).

This sequence belongs to the RimP family.

Its subcellular location is the cytoplasm. Functionally, required for maturation of 30S ribosomal subunits. This chain is Ribosome maturation factor RimP, found in Synechococcus sp. (strain WH7803).